The following is a 436-amino-acid chain: T-box transcription factor TBX6 (436 aa).

The T-box DNA-binding region spans 100-273 (LWKEFSSVGT…ANPFAKGFRE (174 aa)). The span at 271 to 284 (FRENGRNCKRERDA) shows a compositional bias: basic and acidic residues. Disordered regions lie at residues 271 to 339 (FREN…APAP) and 360 to 379 (PSHL…SGRS). Residues 325-339 (EQAPAPGEATAAPAP) are compositionally biased toward low complexity.

As to quaternary structure, forms a dimeric complex with DNA (in vitro). As to expression, expressed in fetal tail bud, posterior spinal tissue, intervertebral disk and testis. Also expressed in adult testis, kidney, lung, muscle and thymus.

The protein resides in the nucleus. In terms of biological role, T-box transcription factor that plays an essential role in the determination of the fate of axial stem cells: neural vs mesodermal. Acts in part by down-regulating, a specific enhancer (N1) of SOX2, to inhibit neural development. Seems to play also an essential role in left/right axis determination and acts through effects on Notch signaling around the node as well as through an effect on the morphology and motility of the nodal cilia. This is T-box transcription factor TBX6 (TBX6) from Homo sapiens (Human).